The primary structure comprises 286 residues: Bifunctional protein FolD (286 aa).

Residues 165–167, Ser-190, and Val-231 contribute to the NADP(+) site; that span reads GRS.

Belongs to the tetrahydrofolate dehydrogenase/cyclohydrolase family. Homodimer.

It carries out the reaction (6R)-5,10-methylene-5,6,7,8-tetrahydrofolate + NADP(+) = (6R)-5,10-methenyltetrahydrofolate + NADPH. The catalysed reaction is (6R)-5,10-methenyltetrahydrofolate + H2O = (6R)-10-formyltetrahydrofolate + H(+). The protein operates within one-carbon metabolism; tetrahydrofolate interconversion. Catalyzes the oxidation of 5,10-methylenetetrahydrofolate to 5,10-methenyltetrahydrofolate and then the hydrolysis of 5,10-methenyltetrahydrofolate to 10-formyltetrahydrofolate. This is Bifunctional protein FolD from Bacillus cereus (strain ZK / E33L).